A 306-amino-acid chain; its full sequence is F-box/LRR-repeat protein At3g26922 (306 aa).

Residues E13–I73 enclose the F-box domain. LRR repeat units follow at residues D67 to F93, C98 to V122, C138 to N170, V171 to R196, L215 to G243, and I263 to L288.

The polypeptide is F-box/LRR-repeat protein At3g26922 (Arabidopsis thaliana (Mouse-ear cress)).